Reading from the N-terminus, the 77-residue chain is Conotoxin CaHr91 (77 aa).

Residues 1-19 (MKLTCALIITVLFLSITAD) form the signal peptide. Residues 20 to 43 (DSRGKQGYRALKSIAGMLNSKTVR) constitute a propeptide that is removed on maturation. 3 cysteine pairs are disulfide-bonded: Cys45/Cys60, Cys52/Cys65, and Cys59/Cys74.

Belongs to the conotoxin O1 superfamily. As to expression, expressed by the venom duct.

Its subcellular location is the secreted. The polypeptide is Conotoxin CaHr91 (Conus capitaneus (Captain cone)).